A 299-amino-acid polypeptide reads, in one-letter code: Secreted LysM effector ldpB (299 aa).

The N-terminal stretch at 1–19 (MGLTSILIAQVLFLGAANS) is a signal peptide. 3 LysM domains span residues 46–91 (WVND…SYCV), 135–182 (AFYK…YVCI), and 211–258 (KYHK…YVCV). Asn154 carries N-linked (GlcNAc...) asparagine glycosylation. The span at 266 to 283 (ATATPQPTPQPQQSSSPD) shows a compositional bias: low complexity. Positions 266-288 (ATATPQPTPQPQQSSSPDQPMPQ) are disordered.

Belongs to the secreted LysM effector family.

Its subcellular location is the secreted. The protein resides in the cell wall. It is found in the extracellular space. It localises to the extracellular matrix. Functionally, cell wall chitin of A.fumigatus recruits lung eosinophils during infection and ldpB might have a role in sequestration of chitin and act as triggers of host immunity to dampen host defense. The polypeptide is Secreted LysM effector ldpB (Aspergillus fumigatus (strain ATCC MYA-4609 / CBS 101355 / FGSC A1100 / Af293) (Neosartorya fumigata)).